Consider the following 229-residue polypeptide: MEEGIKMGTKLTSLFKEGEKYQINTKYKELPIKTNLKLLWIDENMKLLGFSIGACVFKGAFTPGTEVYIKINGKYAYGKVFSCSNELVIEFKEIRKEPEFIRRRTVRVEPDPANPVVVELKVDSYSIKTKAKDISETGVGVILEKDKPESAEVIDIIQKNPNSWFDLYVHLPKHGTAHAKGRVRNLSIEEEGIYIRIGFEAEYSKEDREKVRRYVFERQQEIIKSLKML.

Residues 102 to 217 (RRRTVRVEPD…REKVRRYVFE (116 aa)) enclose the PilZ domain.

It to A.aeolicus aq_820 and aq_1211.

This is an uncharacterized protein from Aquifex aeolicus (strain VF5).